A 135-amino-acid polypeptide reads, in one-letter code: NAD(P)H-quinone oxidoreductase subunit 3 (135 aa).

The next 3 helical transmembrane spans lie at 15 to 35, 79 to 99, and 104 to 124; these read IVFF…SSLV, MFAL…PWAV, and LGLL…VALV.

This sequence belongs to the complex I subunit 3 family. In terms of assembly, NDH-1 can be composed of about 15 different subunits; different subcomplexes with different compositions have been identified which probably have different functions.

The protein localises to the cellular thylakoid membrane. It carries out the reaction a plastoquinone + NADH + (n+1) H(+)(in) = a plastoquinol + NAD(+) + n H(+)(out). The catalysed reaction is a plastoquinone + NADPH + (n+1) H(+)(in) = a plastoquinol + NADP(+) + n H(+)(out). In terms of biological role, NDH-1 shuttles electrons from an unknown electron donor, via FMN and iron-sulfur (Fe-S) centers, to quinones in the respiratory and/or the photosynthetic chain. The immediate electron acceptor for the enzyme in this species is believed to be plastoquinone. Couples the redox reaction to proton translocation, and thus conserves the redox energy in a proton gradient. Cyanobacterial NDH-1 also plays a role in inorganic carbon-concentration. The sequence is that of NAD(P)H-quinone oxidoreductase subunit 3 from Trichodesmium erythraeum (strain IMS101).